The sequence spans 411 residues: MKQELIERFIRYAKVNTQSDPNSHTCPSTSGQWELARMLVEELKAIGMEDVTIDDNGYVMATLPANTDKNVPVIGFLAHMDTAPEFTGANVNPQLIDSYDGGDIVLNKEQGIILSPNDFPELAHYKGHTLITTDGTTLLGADDKAGIAEIMTAMNYLIQHPEIKHGKVRVAFTPDEEIGRGPHKFDVAKFGAQFAYTVDGGPLGELEYESFNAAEAKITIKGKNVHPGTAKGKMINSIKIAMEFEQQLPAHEAPEHTEGYEGFYHLLSFQGSVEETKLHYIIRDFDREQFEARKAKMKEIAASLAQKYGNDRITLEINDQYYNMREKIEPVRHIVDIAHEAMTNLGIEPKVKPIRGGTDGSQLSYMGLPTPNLFAGGENFHGRYEYISADNMVKAAEVIVEIIKLFEQKAS.

Histidine 79 contacts Zn(2+). Aspartate 81 is a catalytic residue. Zn(2+) is bound at residue aspartate 142. The Proton acceptor role is filled by glutamate 176. Glutamate 177, aspartate 199, and histidine 381 together coordinate Zn(2+).

It belongs to the peptidase M20B family. Requires Zn(2+) as cofactor.

It localises to the cytoplasm. The enzyme catalyses Release of the N-terminal residue from a tripeptide.. Functionally, cleaves the N-terminal amino acid of tripeptides. The sequence is that of Peptidase T from Geobacillus kaustophilus (strain HTA426).